The sequence spans 72 residues: Translation initiation factor IF-1 (72 aa).

The 72-residue stretch at M1 to R72 folds into the S1-like domain.

Belongs to the IF-1 family. As to quaternary structure, component of the 30S ribosomal translation pre-initiation complex which assembles on the 30S ribosome in the order IF-2 and IF-3, IF-1 and N-formylmethionyl-tRNA(fMet); mRNA recruitment can occur at any time during PIC assembly.

Its subcellular location is the cytoplasm. Its function is as follows. One of the essential components for the initiation of protein synthesis. Stabilizes the binding of IF-2 and IF-3 on the 30S subunit to which N-formylmethionyl-tRNA(fMet) subsequently binds. Helps modulate mRNA selection, yielding the 30S pre-initiation complex (PIC). Upon addition of the 50S ribosomal subunit IF-1, IF-2 and IF-3 are released leaving the mature 70S translation initiation complex. This Shewanella pealeana (strain ATCC 700345 / ANG-SQ1) protein is Translation initiation factor IF-1.